The chain runs to 481 residues: Delta 4,5-hexuronate-2-O-sulfatase (481 aa).

Serine 64 carries the post-translational modification 3-oxoalanine (Ser). Zn(2+)-binding residues include cysteine 225, cysteine 226, histidine 462, and histidine 469. The segment at 453-481 is disordered; that stretch reads VDADPRCRNHTPGYPSHEGPGAREILKRK. Basic and acidic residues predominate over residues 472-481; sequence PGAREILKRK.

Belongs to the sulfatase family. Zn(2+) is required as a cofactor. The conversion to 3-oxoalanine (also known as C-formylglycine, FGly), of a serine or cysteine residue in prokaryotes and of a cysteine residue in eukaryotes, is critical for catalytic activity.

In terms of biological role, exosulfatase involved in the degradation of the glycosaminoglycans (GAGs) chondroitin sulfate (CS), dermatan sulfate (DS) and heparan sulfate (HS). 2-O-sulfatase active on unsaturated non-reducing end hexuronate units. Has a slight preference for HS-derived structures. GAG-specific sulfatases play a key role in the persistence of the major human gut symbiont B.thetaiotaomicron in the host gastrointestinal tract. The protein is Delta 4,5-hexuronate-2-O-sulfatase of Bacteroides thetaiotaomicron (strain ATCC 29148 / DSM 2079 / JCM 5827 / CCUG 10774 / NCTC 10582 / VPI-5482 / E50).